We begin with the raw amino-acid sequence, 557 residues long: CTP synthase (557 aa).

The amidoligase domain stretch occupies residues 1-272 (MARSKIVKHI…DSLVLKKLML (272 aa)). Serine 18 serves as a coordination point for CTP. Residue serine 18 participates in UTP binding. An ATP-binding site is contributed by 19-24 (SLGKGI). Residue tyrosine 59 participates in L-glutamine binding. ATP is bound at residue aspartate 76. Residues aspartate 76 and glutamate 146 each contribute to the Mg(2+) site. Residues 153 to 155 (DIE), 193 to 198 (KTKPTQ), and lysine 229 contribute to the CTP site. UTP-binding positions include 193-198 (KTKPTQ) and lysine 229. Positions 299–543 (EIGVCGKYTK…VAEAKKFRDE (245 aa)) constitute a Glutamine amidotransferase type-1 domain. L-glutamine is bound at residue glycine 363. Residue cysteine 390 is the Nucleophile; for glutamine hydrolysis of the active site. L-glutamine contacts are provided by residues 391–394 (LGMQ), glutamate 414, and arginine 471. Residues histidine 516 and glutamate 518 contribute to the active site.

The protein belongs to the CTP synthase family. As to quaternary structure, homotetramer.

The catalysed reaction is UTP + L-glutamine + ATP + H2O = CTP + L-glutamate + ADP + phosphate + 2 H(+). The enzyme catalyses L-glutamine + H2O = L-glutamate + NH4(+). It carries out the reaction UTP + NH4(+) + ATP = CTP + ADP + phosphate + 2 H(+). It functions in the pathway pyrimidine metabolism; CTP biosynthesis via de novo pathway; CTP from UDP: step 2/2. Its activity is regulated as follows. Allosterically activated by GTP, when glutamine is the substrate; GTP has no effect on the reaction when ammonia is the substrate. The allosteric effector GTP functions by stabilizing the protein conformation that binds the tetrahedral intermediate(s) formed during glutamine hydrolysis. Inhibited by the product CTP, via allosteric rather than competitive inhibition. Its function is as follows. Catalyzes the ATP-dependent amination of UTP to CTP with either L-glutamine or ammonia as the source of nitrogen. Regulates intracellular CTP levels through interactions with the four ribonucleotide triphosphates. This Chloroherpeton thalassium (strain ATCC 35110 / GB-78) protein is CTP synthase.